Reading from the N-terminus, the 172-residue chain is Crossover junction endodeoxyribonuclease RuvC (172 aa).

Catalysis depends on residues Asp-7, Glu-68, and Asp-140. Asp-7, Glu-68, and Asp-140 together coordinate Mg(2+).

This sequence belongs to the RuvC family. As to quaternary structure, homodimer which binds Holliday junction (HJ) DNA. The HJ becomes 2-fold symmetrical on binding to RuvC with unstacked arms; it has a different conformation from HJ DNA in complex with RuvA. In the full resolvosome a probable DNA-RuvA(4)-RuvB(12)-RuvC(2) complex forms which resolves the HJ. Requires Mg(2+) as cofactor.

Its subcellular location is the cytoplasm. The enzyme catalyses Endonucleolytic cleavage at a junction such as a reciprocal single-stranded crossover between two homologous DNA duplexes (Holliday junction).. Functionally, the RuvA-RuvB-RuvC complex processes Holliday junction (HJ) DNA during genetic recombination and DNA repair. Endonuclease that resolves HJ intermediates. Cleaves cruciform DNA by making single-stranded nicks across the HJ at symmetrical positions within the homologous arms, yielding a 5'-phosphate and a 3'-hydroxyl group; requires a central core of homology in the junction. The consensus cleavage sequence is 5'-(A/T)TT(C/G)-3'. Cleavage occurs on the 3'-side of the TT dinucleotide at the point of strand exchange. HJ branch migration catalyzed by RuvA-RuvB allows RuvC to scan DNA until it finds its consensus sequence, where it cleaves and resolves the cruciform DNA. In Polynucleobacter asymbioticus (strain DSM 18221 / CIP 109841 / QLW-P1DMWA-1) (Polynucleobacter necessarius subsp. asymbioticus), this protein is Crossover junction endodeoxyribonuclease RuvC.